The sequence spans 472 residues: Na(+)/H(+) antiporter NhaA 1 (472 aa).

The next 11 membrane-spanning stretches (helical) occupy residues Thr-34–Trp-54, Gly-86–Gly-106, Leu-116–Ala-136, Gly-146–Gly-166, Val-175–Phe-195, Thr-203–Phe-223, Ile-227–Ala-247, Pro-324–Asp-344, Val-353–Phe-373, Val-394–Leu-414, and Leu-428–Ile-448.

Belongs to the NhaA Na(+)/H(+) (TC 2.A.33) antiporter family.

The protein localises to the cell inner membrane. It catalyses the reaction Na(+)(in) + 2 H(+)(out) = Na(+)(out) + 2 H(+)(in). Its function is as follows. Na(+)/H(+) antiporter that extrudes sodium in exchange for external protons. The polypeptide is Na(+)/H(+) antiporter NhaA 1 (Pseudoalteromonas atlantica (strain T6c / ATCC BAA-1087)).